Consider the following 153-residue polypeptide: 6,7-dimethyl-8-ribityllumazine synthase (153 aa).

Residues F22, 56–58, and 80–82 each bind 5-amino-6-(D-ribitylamino)uracil; these read AFE and AVI. 85 to 86 serves as a coordination point for (2S)-2-hydroxy-3-oxobutyl phosphate; it reads ST. H88 serves as the catalytic Proton donor. F113 contacts 5-amino-6-(D-ribitylamino)uracil. Residue R127 participates in (2S)-2-hydroxy-3-oxobutyl phosphate binding.

This sequence belongs to the DMRL synthase family.

It catalyses the reaction (2S)-2-hydroxy-3-oxobutyl phosphate + 5-amino-6-(D-ribitylamino)uracil = 6,7-dimethyl-8-(1-D-ribityl)lumazine + phosphate + 2 H2O + H(+). Its pathway is cofactor biosynthesis; riboflavin biosynthesis; riboflavin from 2-hydroxy-3-oxobutyl phosphate and 5-amino-6-(D-ribitylamino)uracil: step 1/2. Its function is as follows. Catalyzes the formation of 6,7-dimethyl-8-ribityllumazine by condensation of 5-amino-6-(D-ribitylamino)uracil with 3,4-dihydroxy-2-butanone 4-phosphate. This is the penultimate step in the biosynthesis of riboflavin. In Clostridium novyi (strain NT), this protein is 6,7-dimethyl-8-ribityllumazine synthase.